The sequence spans 200 residues: Molybdenum cofactor guanylyltransferase (200 aa).

GTP-binding positions include 15 to 17, Lys-28, Asp-74, and Asp-104; that span reads LAG. Asp-104 lines the Mg(2+) pocket.

The protein belongs to the MobA family. As to quaternary structure, monomer. The cofactor is Mg(2+).

It is found in the cytoplasm. It catalyses the reaction Mo-molybdopterin + GTP + H(+) = Mo-molybdopterin guanine dinucleotide + diphosphate. Functionally, transfers a GMP moiety from GTP to Mo-molybdopterin (Mo-MPT) cofactor (Moco or molybdenum cofactor) to form Mo-molybdopterin guanine dinucleotide (Mo-MGD) cofactor. This is Molybdenum cofactor guanylyltransferase from Pseudomonas fluorescens (strain Pf0-1).